Reading from the N-terminus, the 203-residue chain is Guanylate kinase (203 aa).

The 179-residue stretch at 3–181 folds into the Guanylate kinase-like domain; sequence GTLYIVSAPS…ALDDLKAIFR (179 aa). 10 to 17 contributes to the ATP binding site; sequence APSGAGKT.

The protein belongs to the guanylate kinase family.

The protein resides in the cytoplasm. It carries out the reaction GMP + ATP = GDP + ADP. Essential for recycling GMP and indirectly, cGMP. The sequence is that of Guanylate kinase (gmk) from Pseudomonas aeruginosa (strain ATCC 15692 / DSM 22644 / CIP 104116 / JCM 14847 / LMG 12228 / 1C / PRS 101 / PAO1).